Here is a 220-residue protein sequence, read N- to C-terminus: Kinetochore protein Spc25 (220 aa).

Positions 79 to 114 form a coiled coil; that stretch reads HLTQEVEAIKLRNLAMKDQIKQQKMLNNQRKNEIME.

Belongs to the SPC25 family. As to quaternary structure, component of the Ndc80 complex, which is composed of Ndc80, Nuf2 and Spc25.

Its subcellular location is the nucleus. It localises to the chromosome. It is found in the centromere. The protein localises to the kinetochore. Its function is as follows. Acts as a component of the essential kinetochore-associated Ndc80 complex, which is required for chromosome segregation and spindle checkpoint activity during meiosis and mitosis. Required for kinetochore integrity and the organization of stable microtubule binding sites in the outer plate of the kinetochore. Participates in SAC signaling that responds specifically to disruptions in spindle microtubule dynamics. The NDC80 complex synergistically enhances the affinity of the SKA1 complex for microtubules and may allow the NDC80 complex to track depolymerizing microtubules. The polypeptide is Kinetochore protein Spc25 (Drosophila orena (Fruit fly)).